A 396-amino-acid chain; its full sequence is MAEVNVRNFNINFGPQHPAAHGVLRMVLELDGEVVERVDPHIGLLHRGTEKLMETKTYLQAGPYLDRLDYVAPMNQEHAFVLAVEKLLGVEVPKRGQLIRVLFSEIGRLLNHLLNVTTQAMDVGALTPPLWGFEQREKLMIFYERACGARLHANYFRPGGVHQDLPEVLIEDIGNFIDPFLVALGNLDALITPNRIFKQRNVDIGVVSIDEAWARGFSGVMIRGAGVPWDLRKSQPYECYDEMEFDIPVGKNSDCYDRYLIRMEEMRQSAKIMRQCVDRLLSTEKDGPVSSLDRKIVPPKRSEMKNSMEALIHHFKLYTEGFHTPPGEVYVAVEAPKGEFGVYLVSDGTNKPYRVKLRAPGFAHLQAMDFLTRGHMLADATAILGSIDIVFGEVDR.

This sequence belongs to the complex I 49 kDa subunit family. NDH-1 is composed of 14 different subunits. Subunits NuoB, C, D, E, F, and G constitute the peripheral sector of the complex.

The protein resides in the cell inner membrane. The catalysed reaction is a quinone + NADH + 5 H(+)(in) = a quinol + NAD(+) + 4 H(+)(out). NDH-1 shuttles electrons from NADH, via FMN and iron-sulfur (Fe-S) centers, to quinones in the respiratory chain. The immediate electron acceptor for the enzyme in this species is believed to be ubiquinone. Couples the redox reaction to proton translocation (for every two electrons transferred, four hydrogen ions are translocated across the cytoplasmic membrane), and thus conserves the redox energy in a proton gradient. This Bartonella bacilliformis (strain ATCC 35685 / KC583 / Herrer 020/F12,63) protein is NADH-quinone oxidoreductase subunit D.